Consider the following 424-residue polypeptide: Glutamate-1-semialdehyde 2,1-aminomutase (424 aa).

K264 bears the N6-(pyridoxal phosphate)lysine mark.

This sequence belongs to the class-III pyridoxal-phosphate-dependent aminotransferase family. HemL subfamily. As to quaternary structure, homodimer. The cofactor is pyridoxal 5'-phosphate.

It localises to the cytoplasm. The enzyme catalyses (S)-4-amino-5-oxopentanoate = 5-aminolevulinate. Its pathway is porphyrin-containing compound metabolism; protoporphyrin-IX biosynthesis; 5-aminolevulinate from L-glutamyl-tRNA(Glu): step 2/2. In Aquifex aeolicus (strain VF5), this protein is Glutamate-1-semialdehyde 2,1-aminomutase (hemL).